The sequence spans 252 residues: Ubiquinone biosynthesis protein COQ4 homolog 2, mitochondrial (252 aa).

Positions 130, 131, 134, and 146 each coordinate Zn(2+).

It belongs to the COQ4 family. As to quaternary structure, component of a multi-subunit COQ enzyme complex. Requires Zn(2+) as cofactor.

The protein resides in the mitochondrion inner membrane. The catalysed reaction is a 4-hydroxy-3-methoxy-5-(all-trans-polyprenyl)benzoate + H(+) = a 2-methoxy-6-(all-trans-polyprenyl)phenol + CO2. It functions in the pathway cofactor biosynthesis; ubiquinone biosynthesis. Its function is as follows. Lyase that catalyzes the C1-decarboxylation of 4-hydroxy-3-methoxy-5-(all-trans-polyprenyl)benzoic acid into 2-methoxy-6-(all-trans-polyprenyl)phenol during ubiquinone biosynthesis. This chain is Ubiquinone biosynthesis protein COQ4 homolog 2, mitochondrial, found in Trypanosoma cruzi (strain CL Brener).